A 248-amino-acid polypeptide reads, in one-letter code: Probable transcriptional regulatory protein RL3983 (248 aa).

It belongs to the TACO1 family.

It is found in the cytoplasm. The polypeptide is Probable transcriptional regulatory protein RL3983 (Rhizobium johnstonii (strain DSM 114642 / LMG 32736 / 3841) (Rhizobium leguminosarum bv. viciae)).